Consider the following 206-residue polypeptide: Imidazoleglycerol-phosphate dehydratase (206 aa).

It belongs to the imidazoleglycerol-phosphate dehydratase family.

Its subcellular location is the cytoplasm. It carries out the reaction D-erythro-1-(imidazol-4-yl)glycerol 3-phosphate = 3-(imidazol-4-yl)-2-oxopropyl phosphate + H2O. Its pathway is amino-acid biosynthesis; L-histidine biosynthesis; L-histidine from 5-phospho-alpha-D-ribose 1-diphosphate: step 6/9. The sequence is that of Imidazoleglycerol-phosphate dehydratase from Leptospira borgpetersenii serovar Hardjo-bovis (strain JB197).